The chain runs to 429 residues: FAD-dependent monooxygenase azaH (429 aa).

The chain crosses the membrane as a helical span at residues 5–25; that stretch reads SIEVAIIGAGITGITLALGLL. FAD-binding residues include glutamate 35 and glycine 48. Asparagine 75 and asparagine 87 each carry an N-linked (GlcNAc...) asparagine glycan. FAD is bound at residue arginine 116. Residue arginine 199 is part of the active site. FAD is bound by residues aspartate 315 and alanine 328.

This sequence belongs to the paxM FAD-dependent monooxygenase family. The cofactor is FAD.

It localises to the membrane. It participates in secondary metabolite biosynthesis. FAD-dependent monooxygenase; part of the gene cluster that mediates the biosynthesis of azaphilones, a class of fungal metabolites characterized by a highly oxygenated pyrano-quinone bicyclic core and exhibiting a broad range of bioactivities. In the first step, the non-reducing polyketide synthase azaA forms the hexaketide precursor from successive condensations of five malonyl-CoA units, presumably with a simple acetyl-CoA starter unit. The reactive polyketide chain then undergoes a PT-mediated C2-C7 cyclization to afford the aromatic ring and is eventually released as an aldehyde through the R-domain. The putative ketoreductase azaE is proposed to catalyze the reduction of the terminal ketone resulting in the early culture product FK17-P2a. The monooxygenase azaH was demonstrated to be the only enzyme required to convert FK17-P2a to azanigerone E. AzaH first hydroxylates the benzaldehyde intermediate FK17-P2a at C4, which triggers the formation of the pyran-ring to afford azanigerone E. In parallel, the 2,4-dimethylhexanoyl chain is synthesized by the HR-PKS azaB and is proposed to be transferred to the C4-hydroxyl of azanigerone E by the acyltransferase azaD directly from the ACP domain of azaB. Alternatively, the 2,4-dimethyl-hexanoyl chain may be offloaded from the HR-PKS as a carboxylic acid and converted to an acyl-CoA by azaF. The resulting acyl-CoA molecule could then be taken up as a substrate by AzaD to form azanigerone B. To yield the carboxylic acid substituent in azanigerone A, the hydroxypropyl side chain of azanigerone B would need to undergo a C-C oxidative cleavage catalyzed by cytochrome P450 AzaI. AzaI is proposed to act on a vicinal diol that leads to a C-C bond scission either through an alkoxyradical intermediate or a peroxy complex. In the biosynthesis of azanigerone A, azanigerone B first undergoes hydroxylation at C10, possibly catalyzed by one of the two FAD-dependent monooxygenases encoded in the cluster, azaG or azaL, resulting in the vicinal diol azanigerone C. Oxidative cleavage of azanigerone C by azaI would yield the corresponding aldehyde derivative of azanigerone A. Finally, the dehydrogenase azaJ is proposed to convert the aldehyde functional group into the carboxylic acid, completing the conversion from azanigerone B to azanigerone A. Alternatively, the oxidation of aldehyde to carboxylic acid may be catalyzed by the same P450 enzyme azaI via consecutive oxidation or by endogenous alcohol dehydrogenase. In Aspergillus niger (strain ATCC 1015 / CBS 113.46 / FGSC A1144 / LSHB Ac4 / NCTC 3858a / NRRL 328 / USDA 3528.7), this protein is FAD-dependent monooxygenase azaH.